Consider the following 837-residue polypeptide: Valine--tRNA ligase (837 aa).

A 'HIGH' region motif is present at residues 46-56; sequence PNLTGTLHIGH. The 'KMSKS' region signature appears at 514–518; the sequence is KMSKS. Lysine 517 is a binding site for ATP. A coiled-coil region spans residues 767-837; it reads VDDTTQRLKS…QLIAKLTKAH (71 aa).

Belongs to the class-I aminoacyl-tRNA synthetase family. ValS type 1 subfamily. As to quaternary structure, monomer.

The protein resides in the cytoplasm. The enzyme catalyses tRNA(Val) + L-valine + ATP = L-valyl-tRNA(Val) + AMP + diphosphate. Catalyzes the attachment of valine to tRNA(Val). As ValRS can inadvertently accommodate and process structurally similar amino acids such as threonine, to avoid such errors, it has a 'posttransfer' editing activity that hydrolyzes mischarged Thr-tRNA(Val) in a tRNA-dependent manner. This is Valine--tRNA ligase from Mycoplasma genitalium (strain ATCC 33530 / DSM 19775 / NCTC 10195 / G37) (Mycoplasmoides genitalium).